The sequence spans 217 residues: Vacuolar protein-sorting-associated protein 37 homolog 1 (217 aa).

Positions 1-49 are disordered; the sequence is MFNFWGSKDQQQGQSRPQEASSQSPWYSPSLVSSPSSSRPQSSGQISAQ. Polar residues predominate over residues 8 to 20; sequence KDQQQGQSRPQEA. Residues 21-47 show a composition bias toward low complexity; the sequence is SSQSPWYSPSLVSSPSSSRPQSSGQIS. The VPS37 C-terminal domain occupies 137 to 217; sequence QEKLNELERQ…IHLAAKTSNI (81 aa).

Belongs to the VPS37 family. As to quaternary structure, component of the endosomal sorting required for transport complex I (ESCRT-I), composed of ELC, VPS28 and VPS37. Interacts with ELC.

Its subcellular location is the endosome. Its function is as follows. Component of the ESCRT-I complex (endosomal sorting complex required for transport I), a regulator of vesicular trafficking process. Required for the sorting of endocytic ubiquitinated cargos into multivesicular bodies (MVBs). This Arabidopsis thaliana (Mouse-ear cress) protein is Vacuolar protein-sorting-associated protein 37 homolog 1 (VPS37-1).